The chain runs to 363 residues: MTSVSPRYRNVPVPKVFLSFRGEEIRHGFISHLADALERYGIMFIIDKDEQRGNDLTSLLLRIKESKVALVIFSSRFAESRFCMDEIVKMKECVDERKLLVIPIFYKVRARDVSGRTGDFGKKFWALAQKSRGCQIKEWMEALECISNKMGLSLGDGRSEADFIKEIVKEVERVLATFTSEDTEDHHCQTVKLLKGLVVGCLAHQELPLVLVFTQVYYYVKFSIFFIEEIFSSCFRKGFVLKPCKEDLQINSISIPGIDLENFKNMMQQAMYELNQMLLQSLGNIDPHRDVAFENQPQDQPDSPIALPEERRVALEATKFCGHAAYWWNQTKTTRARIGKVLIHFWEKLKKKFKDTYDRTVRI.

In terms of domain architecture, TIR spans 12–175 (PVPKVFLSFR…EIVKEVERVL (164 aa)). NAD(+) contacts are provided by residues 21 to 26 (RGEEIR) and Gly-53. The active site involves Glu-86.

In terms of assembly, homooligomer; homooligomerization is required for activity.

The protein localises to the cytoplasm. It is found in the nucleus. It localises to the nucleoplasm. It catalyses the reaction NAD(+) + H2O = ADP-D-ribose + nicotinamide + H(+). It carries out the reaction NADP(+) + H2O = ADP-D-ribose 2'-phosphate + nicotinamide + H(+). Disease resistance (R) protein that specifically recognizes the HopBA1 type III effector protein from P.syringae, and triggers cell death. Acts as a NAD(+) hydrolase (NADase): in response to pathogen-recognition, catalyzes cleavage of NAD(+) into ADP-D-ribose (ADPR) and nicotinamide; NAD(+) cleavage triggering a defense system that promotes cell death. In addition to ADPR, also generates a cyclization variant of cyclic ADPR (cADPR), termed v-cADPR, for which the cyclizing bond is unknown. Also able to hydrolyze NADP(+), but not other NAD(+)-related molecules. In Arabidopsis thaliana (Mouse-ear cress), this protein is Disease resistance protein RBA1.